A 230-amino-acid chain; its full sequence is Phosphoenolpyruvate guanylyltransferase (230 aa).

Phosphoenolpyruvate is bound by residues Thr139, Gly155, and Ser158.

This sequence belongs to the CofC family.

It carries out the reaction phosphoenolpyruvate + GTP + H(+) = enolpyruvoyl-2-diphospho-5'-guanosine + diphosphate. The protein operates within cofactor biosynthesis; coenzyme F420 biosynthesis. In terms of biological role, guanylyltransferase that catalyzes the activation of phosphoenolpyruvate (PEP) as enolpyruvoyl-2-diphospho-5'-guanosine, via the condensation of PEP with GTP. It is involved in the biosynthesis of coenzyme F420, a hydride carrier cofactor. This chain is Phosphoenolpyruvate guanylyltransferase, found in Thermobaculum terrenum (strain ATCC BAA-798 / CCMEE 7001 / YNP1).